A 149-amino-acid chain; its full sequence is Secreted RxLR effector protein 17 (149 aa).

The signal sequence occupies residues 1 to 24 (MRLFYFSAMSVIGLLARNNMVVVA). A RxLR-dEER motif is present at residues 52 to 78 (RSLRTREKDIQDSTVAKDDAIKVEEDR).

It belongs to the RxLR effector family.

Its subcellular location is the secreted. It localises to the host cytoplasm. The protein localises to the host nucleus. Functionally, effector that acts as a broad suppressor of cell death to interrupt plant immunity. Inhibits cell death induced by cell death-inducing proteins, including the PAMP elicitor INF1 from P.infestans. This is Secreted RxLR effector protein 17 from Plasmopara viticola (Downy mildew of grapevine).